Reading from the N-terminus, the 323-residue chain is MDWKNTFQPLAHTQNESLPELMMTHVSDWSAITMIGDDKKSYLQGQVTCDVVTLPNDESTLGAHCDAKGKVWSIFRLFHHNGGYALMQPKSAIEVELVEIKKYAVFSKVDIEQTSDVVIGVMGASADQYIDSISESQGKVRVISGGTAVQVSDNRWALLVTQEATEALVSSSTAEKVSEALWQYHEILDAQPNLSKAEQNEHIPQALNLQAIGGISFSKGCYTGQETVARAKYRGMNKREMRIVSGTSSDVLSLENTIELERSVGENWRGAGRLLNVYQFADNQAIGLMVLPNNLDDDVQLRLTAQPEQIWNILPLPYSLDEE.

Residues tryptophan 29 and tryptophan 182 each contribute to the folate site.

The protein belongs to the tRNA-modifying YgfZ family.

The protein resides in the cytoplasm. In terms of biological role, folate-binding protein involved in regulating the level of ATP-DnaA and in the modification of some tRNAs. It is probably a key factor in regulatory networks that act via tRNA modification, such as initiation of chromosomal replication. The chain is tRNA-modifying protein YgfZ from Vibrio atlanticus (strain LGP32) (Vibrio splendidus (strain Mel32)).